We begin with the raw amino-acid sequence, 517 residues long: Serine hydroxymethyltransferase 1, mitochondrial (517 aa).

The N-terminal 30 residues, 1 to 30 (MAMAMALRRLSSSIDKPIRPLIRSTSCYMS), are a transit peptide targeting the mitochondrion. Lys-286 is modified (N6-(pyridoxal phosphate)lysine).

It belongs to the SHMT family. As to quaternary structure, homotetramer. Interacts with GLU1. Interacts with UBP16. Pyridoxal 5'-phosphate is required as a cofactor. Post-translationally, ubiquitinated. As to expression, ubiquitous. Mostly expressed in leaves, less abundant in stems, flowers and siliques, and barely detectable in roots.

It is found in the mitochondrion. Its subcellular location is the cytoplasm. The enzyme catalyses (6R)-5,10-methylene-5,6,7,8-tetrahydrofolate + glycine + H2O = (6S)-5,6,7,8-tetrahydrofolate + L-serine. It participates in one-carbon metabolism; tetrahydrofolate interconversion. Functionally, functions in the photorespiratory pathway in catalyzing the interconversion of serine and glycine. Involved in controlling cell damage caused by abiotic stress, such as high light and salt and the hypersensitive defense response of plants. This is Serine hydroxymethyltransferase 1, mitochondrial from Arabidopsis thaliana (Mouse-ear cress).